The chain runs to 331 residues: 6-phosphogluconolactonase (331 aa).

Lys287 bears the N6-acetyllysine mark.

Belongs to the cycloisomerase 2 family.

The enzyme catalyses 6-phospho-D-glucono-1,5-lactone + H2O = 6-phospho-D-gluconate + H(+). Its pathway is carbohydrate degradation; pentose phosphate pathway; D-ribulose 5-phosphate from D-glucose 6-phosphate (oxidative stage): step 2/3. Catalyzes the hydrolysis of 6-phosphogluconolactone to 6-phosphogluconate. In Escherichia coli O127:H6 (strain E2348/69 / EPEC), this protein is 6-phosphogluconolactonase.